The primary structure comprises 508 residues: Photosystem II CP47 reaction center protein (508 aa).

The next 6 helical transmembrane spans lie at 21–36 (AVHI…WAGS), 101–115 (IVFS…IWHW), 140–156 (GIHL…FGAF), 203–218 (IAAG…FHLS), 237–252 (VLSS…AFVV), and 457–472 (SFAL…HGSR).

The protein belongs to the PsbB/PsbC family. PsbB subfamily. As to quaternary structure, PSII is composed of 1 copy each of membrane proteins PsbA, PsbB, PsbC, PsbD, PsbE, PsbF, PsbH, PsbI, PsbJ, PsbK, PsbL, PsbM, PsbT, PsbX, PsbY, PsbZ, Psb30/Ycf12, at least 3 peripheral proteins of the oxygen-evolving complex and a large number of cofactors. It forms dimeric complexes. The cofactor is Binds multiple chlorophylls. PSII binds additional chlorophylls, carotenoids and specific lipids..

It is found in the plastid. Its subcellular location is the chloroplast thylakoid membrane. Its function is as follows. One of the components of the core complex of photosystem II (PSII). It binds chlorophyll and helps catalyze the primary light-induced photochemical processes of PSII. PSII is a light-driven water:plastoquinone oxidoreductase, using light energy to abstract electrons from H(2)O, generating O(2) and a proton gradient subsequently used for ATP formation. In Populus trichocarpa (Western balsam poplar), this protein is Photosystem II CP47 reaction center protein.